Reading from the N-terminus, the 277-residue chain is Large ribosomal subunit protein uL2 (277 aa).

Positions 218–277 (PTVRGSVMNPNDHPHGGGEGKAPVGRKAPSTPWGKPALGLKTRNKKAKSDKLIVRRRNEK) are disordered. Positions 264–277 (AKSDKLIVRRRNEK) are enriched in basic and acidic residues.

Belongs to the universal ribosomal protein uL2 family. Part of the 50S ribosomal subunit. Forms a bridge to the 30S subunit in the 70S ribosome.

In terms of biological role, one of the primary rRNA binding proteins. Required for association of the 30S and 50S subunits to form the 70S ribosome, for tRNA binding and peptide bond formation. It has been suggested to have peptidyltransferase activity; this is somewhat controversial. Makes several contacts with the 16S rRNA in the 70S ribosome. This chain is Large ribosomal subunit protein uL2, found in Streptococcus pyogenes serotype M4 (strain MGAS10750).